Here is a 428-residue protein sequence, read N- to C-terminus: Kynureninase (428 aa).

Residues threonine 104, threonine 105, 132–135, aspartate 213, histidine 216, and tyrosine 238 contribute to the pyridoxal 5'-phosphate site; that span reads FPSD. N6-(pyridoxal phosphate)lysine is present on lysine 239. The pyridoxal 5'-phosphate site is built by tryptophan 267 and threonine 295.

Belongs to the kynureninase family. As to quaternary structure, homodimer. Pyridoxal 5'-phosphate serves as cofactor.

The enzyme catalyses L-kynurenine + H2O = anthranilate + L-alanine + H(+). It carries out the reaction 3-hydroxy-L-kynurenine + H2O = 3-hydroxyanthranilate + L-alanine + H(+). Its pathway is amino-acid degradation; L-kynurenine degradation; L-alanine and anthranilate from L-kynurenine: step 1/1. It functions in the pathway cofactor biosynthesis; NAD(+) biosynthesis; quinolinate from L-kynurenine: step 2/3. In terms of biological role, catalyzes the cleavage of L-kynurenine (L-Kyn) and L-3-hydroxykynurenine (L-3OHKyn) into anthranilic acid (AA) and 3-hydroxyanthranilic acid (3-OHAA), respectively. This is Kynureninase from Bacillus cereus (strain ZK / E33L).